The chain runs to 222 residues: Sortase A (222 aa).

The Cytoplasmic segment spans residues 1–7; that stretch reads MLKKTIA. Residues 8–28 form a helical membrane-spanning segment; the sequence is IIILIIGLLLIFSPFIKNGIV. At 29 to 222 the chain is on the extracellular side; that stretch reads KYMSGHETIE…ELENKYFPSK (194 aa). The active-site Proton donor/acceptor is the H127. C188 serves as the catalytic Acyl-thioester intermediate.

This sequence belongs to the bacterial sortase family. Class A subfamily.

Its subcellular location is the cell membrane. Activity is enhanced by Zn(2+) and strongly enhanced by Ca(2+). Inhibited by chalcone, a precursor of several flavonoids, which blocks the SrtA active site. Functionally, transpeptidase that anchors surface proteins to the cell wall. Recognizes and modifies its substrate by proteolytic cleavage of a C-terminal sorting signal. Following cleavage, a covalent intermediate is formed via a thioester bond between the sortase and its substrate, which is then transferred and covalently attached to the cell wall. This sortase recognizes a Leu-Pro-x-Thr-Gly (LPXTG) motif, which is cleaved by the sortase between the threonine and glycine residues. Involved in pathogenesis. May regulate the rate of synthesis and/or the stability of a subset of LPXTG proteins. Not involved in cell wall-anchoring of Hbp2 (SvpA) or Hbp1. In Listeria monocytogenes serovar 1/2a (strain ATCC BAA-679 / EGD-e), this protein is Sortase A.